Consider the following 434-residue polypeptide: MSDTSFVRTEMLAPRPAPVSQVGAIKWMRENLFSGPLNTALTVFGLLATVWLVQAAAPWLLHGVWNANSLTECRAIIAERWGPEATGACWAVIRVRWNQFLFGFYPVDQYWRLFVTFAGLFLALAPVLFDALPRKLIWGTLLYPLAAFWLLWGGPIWGPVSVLAGFAILGLLFTALAPKLGVPVSAGIGLVVAALFWLYAAAPIEAALQSALPLALPEVDSDQFGGFLLALVIGVTAIVVSLPLGILLALGRQSDMLIVKSLSVGIIEFVRGVPLITLLFTASLLLQYFLPPGTNFDLILRVVILVTLFAAAYIAEVIRGGLAALPRGQYEAADALGLDYWQAQRLIIMPQALKISIPGIVSSFIGLFKDTTLVAFVGLFDPLKGISNVVRSDMAWKGTYWEPYIFVALIFFLFNFSMSRYSMYLERKLKRDHR.

The next 10 membrane-spanning stretches (helical) occupy residues 41–61, 113–133, 135–155, 156–176, 180–200, 227–247, 272–292, 298–318, 360–380, and 398–418; these read LTVF…PWLL, LFVT…DALP, KLIW…WGGP, IWGP…FTAL, LGVP…WLYA, FLLA…LGIL, GVPL…FLPP, LILR…AEVI, IVSS…VGLF, and GTYW…NFSM. Residues 227–422 form the ABC transmembrane type-1 domain; that stretch reads FLLALVIGVT…LFNFSMSRYS (196 aa).

Belongs to the binding-protein-dependent transport system permease family. HisMQ subfamily. As to quaternary structure, bztB and BztC form a heterodimer which can form a membrane complex with a homodimer of BztD.

The protein localises to the cell inner membrane. Functionally, part of a binding-protein-dependent transport system for glutamate, glutamine, aspartate and asparagine. Probably responsible for the translocation of the substrate across the membrane. The sequence is that of Glutamate/glutamine/aspartate/asparagine transport system permease protein BztC (bztC) from Rhodobacter capsulatus (strain ATCC BAA-309 / NBRC 16581 / SB1003).